The following is a 262-amino-acid chain: Phosphatase SCO2771 (262 aa).

Functionally, displays phosphatase activity against p-nitrophenyl phosphate (pNPP) in vitro; however, the physiological substrate is unknown. The polypeptide is Phosphatase SCO2771 (Streptomyces coelicolor (strain ATCC BAA-471 / A3(2) / M145)).